The primary structure comprises 141 residues: Hemoglobin subunit alpha-D (141 aa).

Positions 1 to 141 constitute a Globin domain; that stretch reads MLTAEDKKLI…VAAVLAEKYR (141 aa). 2 residues coordinate heme b: histidine 58 and histidine 87.

It belongs to the globin family. Heterotetramer of two alpha-D chains and two beta chains. As to expression, red blood cells.

In terms of biological role, involved in oxygen transport from the lung to the various peripheral tissues. This is Hemoglobin subunit alpha-D (HBAD) from Anas platyrhynchos (Mallard).